We begin with the raw amino-acid sequence, 56 residues long: MAVQQNKKSRSRRDMRRSHDALTTAAVSVDKTSGETHLRHHVTADGYYRGRKVINK.

The tract at residues 1 to 38 (MAVQQNKKSRSRRDMRRSHDALTTAAVSVDKTSGETHL) is disordered. Positions 7-16 (KKSRSRRDMR) are enriched in basic residues.

This sequence belongs to the bacterial ribosomal protein bL32 family.

In Histophilus somni (strain 129Pt) (Haemophilus somnus), this protein is Large ribosomal subunit protein bL32.